The following is a 292-amino-acid chain: ATP synthase gamma chain (292 aa).

Belongs to the ATPase gamma chain family. As to quaternary structure, F-type ATPases have 2 components, CF(1) - the catalytic core - and CF(0) - the membrane proton channel. CF(1) has five subunits: alpha(3), beta(3), gamma(1), delta(1), epsilon(1). CF(0) has three main subunits: a, b and c.

It localises to the cell inner membrane. Produces ATP from ADP in the presence of a proton gradient across the membrane. The gamma chain is believed to be important in regulating ATPase activity and the flow of protons through the CF(0) complex. This chain is ATP synthase gamma chain, found in Nitrobacter hamburgensis (strain DSM 10229 / NCIMB 13809 / X14).